Here is a 606-residue protein sequence, read N- to C-terminus: WD repeat-containing protein 1 (606 aa).

WD repeat units lie at residues 4 to 45, 48 to 87, 93 to 135, 138 to 176, 180 to 218, 224 to 263, 270 to 306, 311 to 351, 358 to 408, 432 to 474, 480 to 518, 523 to 561, and 566 to 604; these read EIKK…LRNI, PAVA…IWDT, ILKY…LWDT, SVGE…FFEG, KFKF…IYDG, VCAL…IWDV, STFP…YLDK, KPLR…YWDS, SFSG…KLDV, LKDQ…VYSI, KDEG…VFSV, SENN…VWTL, and TKVK…EWTI. An N6-acetyllysine mark is found at lysine 28, lysine 81, lysine 95, and lysine 115. Tyrosine 238 bears the Phosphotyrosine mark. At lysine 480 the chain carries N6-acetyllysine.

This sequence belongs to the WD repeat AIP1 family.

It is found in the cytoplasm. It localises to the cytoskeleton. Its subcellular location is the cell projection. The protein resides in the podosome. Its function is as follows. Induces disassembly of actin filaments in conjunction with ADF/cofilin family proteins. Enhances cofilin-mediated actin severing. Involved in cytokinesis. Involved in chemotactic cell migration by restricting lamellipodial membrane protrusions. Involved in myocardium sarcomere organization. Required for cardiomyocyte growth and maintenance. Involved in megakaryocyte maturation and platelet shedding. Required for the establishment of planar cell polarity (PCP) during follicular epithelium development and for cell shape changes during PCP; the function seems to implicate cooperation with CFL1 and/or DSTN/ADF. Involved in the generation/maintenance of cortical tension. Involved in assembly and maintenance of epithelial apical cell junctions and plays a role in the organization of the perijunctional actomyosin belt. This chain is WD repeat-containing protein 1 (Wdr1), found in Rattus norvegicus (Rat).